The primary structure comprises 345 residues: Phosphoribosylformylglycinamidine cyclo-ligase (345 aa).

This sequence belongs to the AIR synthase family.

It is found in the cytoplasm. It carries out the reaction 2-formamido-N(1)-(5-O-phospho-beta-D-ribosyl)acetamidine + ATP = 5-amino-1-(5-phospho-beta-D-ribosyl)imidazole + ADP + phosphate + H(+). Its pathway is purine metabolism; IMP biosynthesis via de novo pathway; 5-amino-1-(5-phospho-D-ribosyl)imidazole from N(2)-formyl-N(1)-(5-phospho-D-ribosyl)glycinamide: step 2/2. The protein is Phosphoribosylformylglycinamidine cyclo-ligase of Pectobacterium atrosepticum (strain SCRI 1043 / ATCC BAA-672) (Erwinia carotovora subsp. atroseptica).